We begin with the raw amino-acid sequence, 26 residues long: U1-poneritoxin-Ni1b (26 aa).

It belongs to the non-disulfide-bridged peptide (NDBP) superfamily. Medium-length antimicrobial peptide (group 3) family. Ponericin-W subfamily. In terms of tissue distribution, expressed by the venom gland.

Its subcellular location is the secreted. It localises to the target cell membrane. Functionally, has a broad spectrum of activity against both Gram-positive and Gram-negative bacteria and S.cerevisiae. Has insecticidal and hemolytic activities. May act by disrupting the integrity of the bacterial cell membrane. The protein is U1-poneritoxin-Ni1b of Neoponera inversa (Ant).